We begin with the raw amino-acid sequence, 507 residues long: Histidine ammonia-lyase (507 aa).

Positions 142 to 144 form a cross-link, 5-imidazolinone (Ala-Gly); it reads ASG. Serine 143 carries the 2,3-didehydroalanine (Ser) modification.

This sequence belongs to the PAL/histidase family. In terms of processing, contains an active site 4-methylidene-imidazol-5-one (MIO), which is formed autocatalytically by cyclization and dehydration of residues Ala-Ser-Gly.

The protein localises to the cytoplasm. The catalysed reaction is L-histidine = trans-urocanate + NH4(+). The protein operates within amino-acid degradation; L-histidine degradation into L-glutamate; N-formimidoyl-L-glutamate from L-histidine: step 1/3. The polypeptide is Histidine ammonia-lyase (Symbiobacterium thermophilum (strain DSM 24528 / JCM 14929 / IAM 14863 / T)).